A 62-amino-acid polypeptide reads, in one-letter code: RVLLTICLLLFPLSALPLDGDQPADQPARHMQSAERNPRFDPVKRCCPYPSCIDIPFCDCCG.

The N-terminal stretch at 1-15 (RVLLTICLLLFPLSA) is a signal peptide. Residues 16-45 (LPLDGDQPADQPARHMQSAERNPRFDPVKR) constitute a propeptide that is removed on maturation. The interval 17–37 (PLDGDQPADQPARHMQSAERN) is disordered. Intrachain disulfides connect cysteine 46–cysteine 60, cysteine 47–cysteine 58, and cysteine 52–cysteine 61. Cysteine 61 carries the post-translational modification Cysteine amide.

This sequence belongs to the conotoxin M superfamily. In terms of tissue distribution, expressed by the venom duct.

The protein localises to the secreted. The polypeptide is Conotoxin reg3.7 (Conus regius (Crown cone)).